A 232-amino-acid polypeptide reads, in one-letter code: Orotidine 5'-phosphate decarboxylase (232 aa).

Residues Asp10, Lys32, 59 to 68 (DLKFHDIPNT), Thr119, Arg180, Gln189, Gly209, and Arg210 contribute to the substrate site. Lys61 (proton donor) is an active-site residue.

This sequence belongs to the OMP decarboxylase family. Type 1 subfamily. In terms of assembly, homodimer.

The enzyme catalyses orotidine 5'-phosphate + H(+) = UMP + CO2. It functions in the pathway pyrimidine metabolism; UMP biosynthesis via de novo pathway; UMP from orotate: step 2/2. Its function is as follows. Catalyzes the decarboxylation of orotidine 5'-monophosphate (OMP) to uridine 5'-monophosphate (UMP). The polypeptide is Orotidine 5'-phosphate decarboxylase (Actinobacillus succinogenes (strain ATCC 55618 / DSM 22257 / CCUG 43843 / 130Z)).